A 233-amino-acid polypeptide reads, in one-letter code: C-type lectin domain-containing protein 87 (233 aa).

The N-terminal stretch at 1–20 is a signal peptide; it reads MRFFRFLVFPVIAGLSSVLA. Asparagine 26 carries N-linked (GlcNAc...) asparagine glycosylation. An O-linked (Xyl...) (chondroitin sulfate) serine glycan is attached at serine 32. N-linked (GlcNAc...) asparagine glycosylation occurs at asparagine 81. In terms of domain architecture, C-type lectin spans 93-223; that stretch reads FADSCYWIET…CTYLLYSICE (131 aa). 2 disulfides stabilise this stretch: cysteine 114-cysteine 222 and cysteine 193-cysteine 214. N-linked (GlcNAc...) asparagine glycosylation is present at asparagine 225.

This chain is C-type lectin domain-containing protein 87, found in Caenorhabditis briggsae.